The chain runs to 338 residues: RNA 3'-terminal phosphate cyclase (338 aa).

Residues Gln103 and 283-287 (YLADQ) contribute to the ATP site. The Tele-AMP-histidine intermediate role is filled by His308.

The protein belongs to the RNA 3'-terminal cyclase family. Type 1 subfamily.

It localises to the cytoplasm. The catalysed reaction is a 3'-end 3'-phospho-ribonucleotide-RNA + ATP = a 3'-end 2',3'-cyclophospho-ribonucleotide-RNA + AMP + diphosphate. In terms of biological role, catalyzes the conversion of 3'-phosphate to a 2',3'-cyclic phosphodiester at the end of RNA. The mechanism of action of the enzyme occurs in 3 steps: (A) adenylation of the enzyme by ATP; (B) transfer of adenylate to an RNA-N3'P to produce RNA-N3'PP5'A; (C) and attack of the adjacent 2'-hydroxyl on the 3'-phosphorus in the diester linkage to produce the cyclic end product. The biological role of this enzyme is unknown but it is likely to function in some aspects of cellular RNA processing. The protein is RNA 3'-terminal phosphate cyclase of Escherichia coli O8 (strain IAI1).